The following is a 639-amino-acid chain: Serine/threonine-protein kinase PAK mbt (639 aa).

A CRIB domain is found at 11–24 (ISMPSNFEHRVHTG). The linker stretch occupies residues 25 to 367 (FDKRENKYVG…VVSAGDPREN (343 aa)). Disordered stretches follow at residues 79 to 195 (HHNN…SLLY) and 222 to 345 (RSNL…QDQR). 4 stretches are compositionally biased toward low complexity: residues 91 to 129 (NSSSTMMMGSMAPMNPMAPGAHPMMSHGPGMMMPPETGG), 138 to 159 (VARSNSLRSSSPPRVRRVANVP), 227 to 241 (PPSGGSMPQQQQTSP), and 274 to 295 (QQQQQQQQQAKQGGDQNQNPLH). Residues 296–308 (PHAHPHPHHHQHL) show a composition bias toward basic residues. Low complexity predominate over residues 309–331 (AKSASRASSSSGGASSAAQQASG). One can recognise a Protein kinase domain in the interval 368-619 (LDHFNKIGEG…AAELLAHPFL (252 aa)). Residues 374–382 (IGEGSTGTV) and lysine 397 contribute to the ATP site. Aspartate 487 functions as the Proton acceptor in the catalytic mechanism. Residue serine 521 is modified to Phosphoserine. Position 525 is a phosphothreonine (threonine 525).

This sequence belongs to the protein kinase superfamily. STE Ser/Thr protein kinase family. STE20 subfamily. Interacts tightly with GTP-bound but not GDP-bound Cdc42 and weakly with Rac1. The cofactor is Mg(2+). In terms of processing, autophosphorylated when activated by Cdc42. As to expression, expressed in adult brain and eye. High levels detected in developing photoreceptor cells and future bristle cells, and lower levels in cone and pigment cells, as detected in third instar eye imaginal disks (at protein level).

It localises to the cell junction. The protein localises to the adherens junction. Its subcellular location is the cell membrane. It catalyses the reaction L-seryl-[protein] + ATP = O-phospho-L-seryl-[protein] + ADP + H(+). It carries out the reaction L-threonyl-[protein] + ATP = O-phospho-L-threonyl-[protein] + ADP + H(+). Its function is as follows. Involved in neurogenesis of the adult central nervous system, and together with Cdc42, regulates photoreceptor cell morphogenesis. Phosphorylates exogenous substrates when activated by Cdc42. The chain is Serine/threonine-protein kinase PAK mbt from Drosophila melanogaster (Fruit fly).